We begin with the raw amino-acid sequence, 606 residues long: tRNA 5-methylaminomethyl-2-thiouridine biosynthesis bifunctional protein MnmC (606 aa).

Positions 1 to 237 (MNSNSSVQFN…KRDMLCGHYL (237 aa)) are tRNA (mnm(5)s(2)U34)-methyltransferase. The interval 254–606 (IGGGISAACS…RRISVSRFKG (353 aa)) is FAD-dependent cmnm(5)s(2)U34 oxidoreductase.

In the N-terminal section; belongs to the methyltransferase superfamily. tRNA (mnm(5)s(2)U34)-methyltransferase family. The protein in the C-terminal section; belongs to the DAO family. Requires FAD as cofactor.

The protein localises to the cytoplasm. It catalyses the reaction 5-aminomethyl-2-thiouridine(34) in tRNA + S-adenosyl-L-methionine = 5-methylaminomethyl-2-thiouridine(34) in tRNA + S-adenosyl-L-homocysteine + H(+). Functionally, catalyzes the last two steps in the biosynthesis of 5-methylaminomethyl-2-thiouridine (mnm(5)s(2)U) at the wobble position (U34) in tRNA. Catalyzes the FAD-dependent demodification of cmnm(5)s(2)U34 to nm(5)s(2)U34, followed by the transfer of a methyl group from S-adenosyl-L-methionine to nm(5)s(2)U34, to form mnm(5)s(2)U34. This Idiomarina loihiensis (strain ATCC BAA-735 / DSM 15497 / L2-TR) protein is tRNA 5-methylaminomethyl-2-thiouridine biosynthesis bifunctional protein MnmC.